The following is a 1250-amino-acid chain: DNA-directed RNA polymerase subunit beta (1250 aa).

The segment at 1215–1250 (QDLNDDDINPDDTIDAELDDNLFDDDFDDTFDDDDL) is disordered.

This sequence belongs to the RNA polymerase beta chain family. In terms of assembly, the RNAP catalytic core consists of 2 alpha, 1 beta, 1 beta' and 1 omega subunit. When a sigma factor is associated with the core the holoenzyme is formed, which can initiate transcription.

It carries out the reaction RNA(n) + a ribonucleoside 5'-triphosphate = RNA(n+1) + diphosphate. In terms of biological role, DNA-dependent RNA polymerase catalyzes the transcription of DNA into RNA using the four ribonucleoside triphosphates as substrates. The protein is DNA-directed RNA polymerase subunit beta of Acetivibrio thermocellus (strain ATCC 27405 / DSM 1237 / JCM 9322 / NBRC 103400 / NCIMB 10682 / NRRL B-4536 / VPI 7372) (Clostridium thermocellum).